The sequence spans 370 residues: L-lactate oxidase (370 aa).

The 360-residue stretch at 8-367 (DPDGMPVTLS…TPDLLTGFSG (360 aa)) folds into the FMN hydroxy acid dehydrogenase domain. Tyr34 contacts pyruvate. Residues 87–89 (PMA), Ser116, and Gln136 contribute to the FMN site. Tyr138 contacts pyruvate. Thr164 contributes to the FMN binding site. Arg173 contributes to the pyruvate binding site. FMN-binding residues include Lys238 and Ser260. Residues His262 and Arg265 each coordinate pyruvate. Residue His262 is the Proton acceptor of the active site. FMN-binding positions include 293–297 (DGGIR) and Arg317.

This sequence belongs to the FMN-dependent alpha-hydroxy acid dehydrogenase family. As to quaternary structure, homotetramer. The cofactor is FMN.

It carries out the reaction (S)-lactate + O2 = pyruvate + H2O2. It catalyses the reaction a (2S)-2-hydroxycarboxylate + O2 = a 2-oxocarboxylate + H2O2. The catalysed reaction is glycolate + O2 = glyoxylate + H2O2. The enzyme catalyses 2-hydroxyoctadecanoate + O2 = 2-oxooctadecanoate + H2O2. Functionally, catalyzes the oxidation of (S)-lactate (L-lactate) to pyruvate, with a reduction of O2 to H2O2. Is also able to use glycolate and to a lesser extent 2-hydroxyoctadecanoate as substrate. The chain is L-lactate oxidase from Roseobacter sp. (strain GAI101).